The sequence spans 139 residues: Large ribosomal subunit protein mL42 (139 aa).

Residues methionine 1–histidine 32 constitute a mitochondrion transit peptide.

This sequence belongs to the mitochondrion-specific ribosomal protein mL42 family. In terms of assembly, component of the mitochondrial ribosome large subunit (39S) which comprises a 16S rRNA and about 50 distinct proteins. Component of the mitochondrial ribosome small subunit (28S) which comprises a 12S rRNA and about 30 distinct proteins.

It localises to the mitochondrion. The protein is Large ribosomal subunit protein mL42 (MRPL42) of Pongo abelii (Sumatran orangutan).